Here is a 371-residue protein sequence, read N- to C-terminus: Polygalacturonase (371 aa).

Residues 1–19 (MPSYLRNLVWATLAAGLVS) form the signal peptide. Residues 20–34 (AAPTPSRVSDLTKKS) constitute a propeptide that is removed on maturation. A disulfide bridge links Cys38 with Cys53. 7 PbH1 repeats span residues 95–117 (GPLI…VINA), 165–195 (SDNL…DISE), 196–217 (STGV…AINS), 218–238 (GQNI…SIGS), 247–268 (VKNV…RIKT), 276–298 (VSDV…VIEQ), and 310–355 (TSGV…DITS). Asp210 serves as the catalytic Proton donor. Cys212 and Cys228 are joined by a disulfide. His232 is an active-site residue. N-linked (GlcNAc...) asparagine glycosylation is present at Asn249. Intrachain disulfides connect Cys338/Cys343 and Cys362/Cys371.

It belongs to the glycosyl hydrolase 28 family.

The protein resides in the secreted. It catalyses the reaction (1,4-alpha-D-galacturonosyl)n+m + H2O = (1,4-alpha-D-galacturonosyl)n + (1,4-alpha-D-galacturonosyl)m.. The sequence is that of Polygalacturonase from Penicillium janthinellum (Penicillium vitale).